The chain runs to 212 residues: MQFGLDFNLVEELVAGVDEVGRGPLCGPVVTAAVILDPARPIEGLNDSKKLTEARREALFDEIREKAVAWCIARAEVEEIDQLNILHATMLAMQRAVEGLSVTPRLALIDGNRCPQLAVPSAPVIQGDAQVPAIAAASILAKVSRDREMQALDLCYPGYGLAGHKGYPTPSHLEALRRLGPTPIHRRSFAPVRAMLEQVSIEVEVPASVLLV.

One can recognise an RNase H type-2 domain in the interval 12-201 (ELVAGVDEVG…VRAMLEQVSI (190 aa)). Residues D18, E19, and D110 each coordinate a divalent metal cation.

Belongs to the RNase HII family. Mn(2+) serves as cofactor. Mg(2+) is required as a cofactor.

The protein resides in the cytoplasm. It catalyses the reaction Endonucleolytic cleavage to 5'-phosphomonoester.. Its function is as follows. Endonuclease that specifically degrades the RNA of RNA-DNA hybrids. In Stutzerimonas stutzeri (strain A1501) (Pseudomonas stutzeri), this protein is Ribonuclease HII.